We begin with the raw amino-acid sequence, 460 residues long: NADH-ubiquinone oxidoreductase chain 4 (460 aa).

13 consecutive transmembrane segments (helical) span residues 20–42 (AKWLWTTSIAQSLVIALASLSWL), 61–81 (PLSTPLLVLTCWLLPLMVLAS), 94–113 (RTYISLLVSLQMFLILAFGA), 117–139 (IMFYIMFEATLLPTLIIITRWGN), 148–168 (TYFLFYTLAGSLPLLVALLLL), 195–215 (LWWAACLLAFLVKMPVYGVHL), 225–245 (PIAGSMILAAVLLKLGGYGMM), 258–278 (LAYPFIVLALWGIIMTGSICL), 285–304 (SLIAYSSVGHMGLVAGGILI), 308–330 (WGFTGAIILMIAHGLASSALFCL), 351–371 (MILPLMTTWWFVASLANLALP), 394–414 (LLLTGLGTLITASYSLYLFLM), and 436–456 (LLITLHLIPIILLILKPELMW).

Belongs to the complex I subunit 4 family.

It localises to the mitochondrion membrane. It catalyses the reaction a ubiquinone + NADH + 5 H(+)(in) = a ubiquinol + NAD(+) + 4 H(+)(out). Its function is as follows. Core subunit of the mitochondrial membrane respiratory chain NADH dehydrogenase (Complex I) that is believed to belong to the minimal assembly required for catalysis. Complex I functions in the transfer of electrons from NADH to the respiratory chain. The immediate electron acceptor for the enzyme is believed to be ubiquinone. The protein is NADH-ubiquinone oxidoreductase chain 4 (MT-ND4) of Salmo salar (Atlantic salmon).